The sequence spans 337 residues: 2-oxoglutarate-Fe(II) type oxidoreductase (337 aa).

In terms of domain architecture, Fe2OG dioxygenase spans 179 to 282; sequence AIATLRYLHY…RYSIPFFFTG (104 aa). Fe cation is bound by residues His-205, Asp-207, and His-263. Position 273 (Arg-273) interacts with 2-oxoglutarate.

The protein belongs to the iron/ascorbate-dependent oxidoreductase family. Fe(2+) is required as a cofactor. Endocrocin is specifically produced in conidia.

It participates in secondary metabolite biosynthesis. Its function is as follows. 2-oxoglutarate-Fe(II) type oxidoreductase; part of the gene cluster that mediates the biosynthesis of endocrocin, a simple anthraquinone interesting for many biotechnological applications. The pathway begins with the synthesis of atrochrysone thioester by the polyketide synthase (PKS) encA. The atrochrysone carboxyl ACP thioesterase encB then breaks the thioester bond and releases the atrochrysone carboxylic acid from encA. The atrochrysone carboxylic acid is then converted to endocrocin anthrone which is further oxidized into endocrocin by encC. The exact function of encD has not been identified yet, but it negatively regulates endocrocin production, likely through the modification of endocrocin itself. This is 2-oxoglutarate-Fe(II) type oxidoreductase from Aspergillus fumigatus (strain ATCC MYA-4609 / CBS 101355 / FGSC A1100 / Af293) (Neosartorya fumigata).